Here is a 111-residue protein sequence, read N- to C-terminus: Notch-regulated ankyrin repeat-containing protein B (111 aa).

ANK repeat units lie at residues 47 to 76 (EGQTALHQSVIDGNLELVKLLVKFGADTRL) and 80 to 109 (DGWSALHIAAFGGHQDIVLYLITRAKYSSS).

This sequence belongs to the NRARP family.

Regulates independently canonical Wnt and Notch signaling by modulating LEF1 and Notch protein turnover. Stabilizes LEF1, a pivotal transcription factor in the Wnt signaling cascade, by blocking its ubiquitination. Involved in angiogenesis; involved in intersegmental vessel patterning during development. This chain is Notch-regulated ankyrin repeat-containing protein B (nrarpb), found in Danio rerio (Zebrafish).